A 355-amino-acid polypeptide reads, in one-letter code: Protein RecA (355 aa).

74–81 (GPESSGKT) lines the ATP pocket.

The protein belongs to the RecA family.

The protein localises to the cytoplasm. Can catalyze the hydrolysis of ATP in the presence of single-stranded DNA, the ATP-dependent uptake of single-stranded DNA by duplex DNA, and the ATP-dependent hybridization of homologous single-stranded DNAs. It interacts with LexA causing its activation and leading to its autocatalytic cleavage. The polypeptide is Protein RecA (Cytophaga hutchinsonii (strain ATCC 33406 / DSM 1761 / CIP 103989 / NBRC 15051 / NCIMB 9469 / D465)).